A 318-amino-acid polypeptide reads, in one-letter code: Ornithine carbamoyltransferase (318 aa).

Residues 63–66 (STRT), Gln-90, Arg-114, and 141–144 (HPCQ) each bind carbamoyl phosphate. Residues Asn-172, Asp-235, and 239–240 (SM) each bind L-ornithine. Carbamoyl phosphate-binding positions include 275–276 (CL) and Arg-303.

It belongs to the aspartate/ornithine carbamoyltransferase superfamily. OTCase family.

It is found in the cytoplasm. The catalysed reaction is carbamoyl phosphate + L-ornithine = L-citrulline + phosphate + H(+). The protein operates within amino-acid biosynthesis; L-arginine biosynthesis; L-arginine from L-ornithine and carbamoyl phosphate: step 1/3. In terms of biological role, reversibly catalyzes the transfer of the carbamoyl group from carbamoyl phosphate (CP) to the N(epsilon) atom of ornithine (ORN) to produce L-citrulline. The sequence is that of Ornithine carbamoyltransferase from Prochlorococcus marinus (strain MIT 9313).